The primary structure comprises 126 residues: C2H2-type zinc-finger transcription factor M5 (126 aa).

Disordered regions lie at residues 17–52 (AQPD…NDNR) and 103–126 (EKKS…RVKD). A compositionally biased stretch (polar residues) spans 38–48 (SNGSSSGTATD). The segment at 51 to 76 (NRCWDHGCNGKKFLNHSNLVRHRREN) adopts a C2H2-type 1; degenerate zinc-finger fold. A C2H2-type 2; degenerate zinc finger spans residues 83 to 115 (FTCPMCGAYFSRSTARNQHLEKKSCNRVRRYSN). The segment covering 115–126 (NGRERPRPRVKD) has biased composition (basic and acidic residues).

This sequence belongs to the GLI C2H2-type zinc-finger protein family.

Its subcellular location is the nucleus. Functionally, transcription factor that probably regulates the expression of the gene cluster that mediates the biosynthesis of squalestatin S1 (SQS1, also known as zaragozic acid A), a heavily oxidized fungal polyketide that offers potent cholesterol lowering activity by targeting squalene synthase (SS). The sequence is that of C2H2-type zinc-finger transcription factor M5 from Phoma sp. (strain ATCC 20986 / MF5453).